The chain runs to 278 residues: Methyltransferase GfsG (278 aa).

S-adenosyl-L-methionine-binding positions include Gln-105 and 128 to 129 (DA). Glu-146 serves as the catalytic Proton acceptor. His-150 contacts S-adenosyl-L-methionine.

This sequence belongs to the methyltransferase superfamily.

The protein operates within antibiotic biosynthesis. Methylase required for synthesis of the 16-membered macrolide antibiotics FD-891 and FD-892. In vitro uses S-adenosyl-L-methionine to methylate a number of biosynthetic intermediates in the synthesis of FD-891. The sequence is that of Methyltransferase GfsG from Streptomyces halstedii.